A 342-amino-acid chain; its full sequence is tRNA N6-adenosine threonylcarbamoyltransferase (342 aa).

The Fe cation site is built by His115 and His119. Residues 137 to 141 (IVSGG), Asp170, Gly183, Asp187, and Asn276 contribute to the substrate site. Residue Asp304 coordinates Fe cation.

This sequence belongs to the KAE1 / TsaD family. Fe(2+) is required as a cofactor.

It is found in the cytoplasm. It carries out the reaction L-threonylcarbamoyladenylate + adenosine(37) in tRNA = N(6)-L-threonylcarbamoyladenosine(37) in tRNA + AMP + H(+). In terms of biological role, required for the formation of a threonylcarbamoyl group on adenosine at position 37 (t(6)A37) in tRNAs that read codons beginning with adenine. Is involved in the transfer of the threonylcarbamoyl moiety of threonylcarbamoyl-AMP (TC-AMP) to the N6 group of A37, together with TsaE and TsaB. TsaD likely plays a direct catalytic role in this reaction. This is tRNA N6-adenosine threonylcarbamoyltransferase from Staphylococcus haemolyticus (strain JCSC1435).